The sequence spans 347 residues: Protein RecA (347 aa).

ATP is bound at residue 65 to 72 (GPESSGKT). Basic and acidic residues predominate over residues 327–336 (KFEPTELSRE). Residues 327–347 (KFEPTELSREEGDEDTLEDAM) form a disordered region. Acidic residues predominate over residues 337 to 347 (EGDEDTLEDAM).

The protein belongs to the RecA family.

Its subcellular location is the cytoplasm. Functionally, can catalyze the hydrolysis of ATP in the presence of single-stranded DNA, the ATP-dependent uptake of single-stranded DNA by duplex DNA, and the ATP-dependent hybridization of homologous single-stranded DNAs. It interacts with LexA causing its activation and leading to its autocatalytic cleavage. The protein is Protein RecA of Xylella fastidiosa (strain M23).